Reading from the N-terminus, the 462-residue chain is MTTTKLWGGRFTAKAAEWVDEFGASIHFDEQMAAEDIEGSIAHAKMLGKQQIISESESAEIVAGLVALKKELDDGMLAFDVKNEDIHMNIEVLLTQKIGAVAGKLHTARSRNDQVATDFHLWVKHRLPHVLDALTELQETLLQLATQHAGTIMSGYTHLQHAQPITYGHYLLAYCEMFQRDYDRFEFNQKHTDMLPLGAAALAGTTFPIDRDFVAEQLGFNDIYHNSLDAVSDRDFALEFLSNAAMLMMHLSRMAEELILWSTYEFNYIELSDDFSTGSSIMPQKKNADFAELVRGKTGRTYGALMALLTTMKALPLAYNKDMQEDKEQVFDVMDTVLAAIKIFTGMLSEITVHKERMLASTQDDFSNATELADYLATKGVPFREAHAIVGQLVLTGIQTHTPLQNMALADLQAAAPQIEADIYLVLQSETAVNRRTSIGGTAVANVQKEIARQYKNLEARQ.

The protein belongs to the lyase 1 family. Argininosuccinate lyase subfamily.

It localises to the cytoplasm. The catalysed reaction is 2-(N(omega)-L-arginino)succinate = fumarate + L-arginine. It functions in the pathway amino-acid biosynthesis; L-arginine biosynthesis; L-arginine from L-ornithine and carbamoyl phosphate: step 3/3. The polypeptide is Argininosuccinate lyase (Leuconostoc citreum (strain KM20)).